A 242-amino-acid chain; its full sequence is Biosynthetic peptidoglycan transglycosylase (242 aa).

A helical membrane pass occupies residues Ile19–Val39.

The protein belongs to the glycosyltransferase 51 family.

It localises to the cell inner membrane. It carries out the reaction [GlcNAc-(1-&gt;4)-Mur2Ac(oyl-L-Ala-gamma-D-Glu-L-Lys-D-Ala-D-Ala)](n)-di-trans,octa-cis-undecaprenyl diphosphate + beta-D-GlcNAc-(1-&gt;4)-Mur2Ac(oyl-L-Ala-gamma-D-Glu-L-Lys-D-Ala-D-Ala)-di-trans,octa-cis-undecaprenyl diphosphate = [GlcNAc-(1-&gt;4)-Mur2Ac(oyl-L-Ala-gamma-D-Glu-L-Lys-D-Ala-D-Ala)](n+1)-di-trans,octa-cis-undecaprenyl diphosphate + di-trans,octa-cis-undecaprenyl diphosphate + H(+). It functions in the pathway cell wall biogenesis; peptidoglycan biosynthesis. In terms of biological role, peptidoglycan polymerase that catalyzes glycan chain elongation from lipid-linked precursors. In Salmonella newport (strain SL254), this protein is Biosynthetic peptidoglycan transglycosylase.